Here is a 98-residue protein sequence, read N- to C-terminus: uncharacterized protein (98 aa).

This is an uncharacterized protein from Rickettsia conorii (strain ATCC VR-613 / Malish 7).